A 318-amino-acid polypeptide reads, in one-letter code: Taste receptor type 2 member 60 (318 aa).

Residues 1–7 (MNGDHMV) lie on the Extracellular side of the membrane. A helical membrane pass occupies residues 8-28 (LGSSVTDKKAIILVTILLLLR). The Cytoplasmic segment spans residues 29–40 (LVAIAGNGFITA). The chain crosses the membrane as a helical span at residues 41-61 (ALGVEWVLRRMLLPCDKLLVS). The Extracellular portion of the chain corresponds to 62–88 (LGASHFCLQSVVMGKTIYVFLYPMAFP). A helical membrane pass occupies residues 89 to 109 (YNPVLQFLAFQWDFLNAATLW). Topologically, residues 110–128 (FSTWLSVFYCVKIATFTHP) are cytoplasmic. A helical membrane pass occupies residues 129–149 (VFFWLKHKLSGWLPWMIFSYV). Residues 150 to 183 (GLSSFTTILFFIGNHRMYQNYLKNHLQPWNVTGN) are Extracellular-facing. Residue Asn179 is glycosylated (N-linked (GlcNAc...) asparagine). A helical membrane pass occupies residues 184–204 (SIRSYCEKFYLFPLKMITWTM). The Cytoplasmic segment spans residues 205-234 (PTAVFFICMILLITSLGRHMKKALLTTSGF). Residues 235 to 255 (REPSVQAHIKALLALLSFAML) traverse the membrane as a helical segment. Topologically, residues 256–264 (FISYFLSLV) are extracellular. A helical transmembrane segment spans residues 265–285 (FSAAGIFPPLDFKFWVWESVI). The Cytoplasmic segment spans residues 286 to 318 (YLCAAVHPIILLFSNCRLRAVLKSRRSSRCGTP).

Belongs to the G-protein coupled receptor T2R family.

The protein localises to the membrane. In terms of biological role, receptor that may play a role in the perception of bitterness and is gustducin-linked. May play a role in sensing the chemical composition of the gastrointestinal content. The activity of this receptor may stimulate alpha gustducin, mediate PLC-beta-2 activation and lead to the gating of TRPM5. This chain is Taste receptor type 2 member 60 (TAS2R60), found in Pan paniscus (Pygmy chimpanzee).